The sequence spans 26 residues: uncharacterized protein (26 aa).

This sequence belongs to the asfivirus E66L family.

This is an uncharacterized protein from Ornithodoros (relapsing fever ticks).